A 1217-amino-acid polypeptide reads, in one-letter code: ATP-dependent helicase/nuclease subunit A (1217 aa).

Residues 10-475 enclose the UvrD-like helicase ATP-binding domain; it reads VIWTDAQWQS…IDLSQNFRSR (466 aa). Residue 31–38 coordinates ATP; the sequence is AAAGSGKT. The 311-residue stretch at 476–786 folds into the UvrD-like helicase C-terminal domain; it reads KEVLSTTNYI…RMMTIHSSKG (311 aa).

This sequence belongs to the helicase family. AddA subfamily. Heterodimer of AddA and AddB/RexB. Requires Mg(2+) as cofactor.

The enzyme catalyses Couples ATP hydrolysis with the unwinding of duplex DNA by translocating in the 3'-5' direction.. The catalysed reaction is ATP + H2O = ADP + phosphate + H(+). Its function is as follows. The heterodimer acts as both an ATP-dependent DNA helicase and an ATP-dependent, dual-direction single-stranded exonuclease. Recognizes the chi site generating a DNA molecule suitable for the initiation of homologous recombination. The AddA nuclease domain is required for chi fragment generation; this subunit has the helicase and 3' -&gt; 5' nuclease activities. This Staphylococcus aureus (strain USA300) protein is ATP-dependent helicase/nuclease subunit A.